A 185-amino-acid polypeptide reads, in one-letter code: Ribosome-recycling factor (185 aa).

This sequence belongs to the RRF family.

The protein resides in the cytoplasm. Functionally, responsible for the release of ribosomes from messenger RNA at the termination of protein biosynthesis. May increase the efficiency of translation by recycling ribosomes from one round of translation to another. This is Ribosome-recycling factor from Vesicomyosocius okutanii subsp. Calyptogena okutanii (strain HA).